Reading from the N-terminus, the 321-residue chain is Sphingolipid delta(4)-desaturase DES1 (321 aa).

The next 6 helical transmembrane spans lie at 41-61, 68-88, 107-127, 157-177, 187-206, and 208-230; these read PNFK…LFVV, WLIV…MLAV, ILGF…FKKY, FGKF…PLII, IINT…FLGW, and PLAY…GHFI.

The protein belongs to the fatty acid desaturase type 1 family. DEGS subfamily. Testes.

It is found in the endoplasmic reticulum membrane. The protein resides in the membrane. It localises to the mitochondrion. It carries out the reaction an N-acylsphinganine + 2 Fe(II)-[cytochrome b5] + O2 + 2 H(+) = an N-acylsphing-4-enine + 2 Fe(III)-[cytochrome b5] + 2 H2O. It catalyses the reaction an N-acyleicosasphinganine + 2 Fe(II)-[cytochrome b5] + O2 + 2 H(+) = an N-acyleicosasphing-4-enine + 2 Fe(III)-[cytochrome b5] + 2 H2O. It functions in the pathway sphingolipid metabolism. Its function is as follows. Has sphingolipid-delta-4-desaturase activity. Converts sphinganine-containing sphingolipids (such as N-acylsphinganines or dihydroceramides) into sphingolipids containing the delta-4-desaturated sphingoid base (E)-sphing-4-enine (such as N-acylsphing-4-enines or ceramides), which are required for many different functions (structural functions as well as signaling). Required to initiate spermatid differentiation among other signals. Required for central spindle assembly and cytokinesis during male meiosis, may act as part of an anchoring mechanism that links membrane-bounded cellular compartments to components of the cytoskeleton. The protein is Sphingolipid delta(4)-desaturase DES1 of Drosophila melanogaster (Fruit fly).